The sequence spans 181 residues: ADP-ribosylation factor 1 (181 aa).

A lipid anchor (N-myristoyl glycine) is attached at glycine 2. GTP contacts are provided by residues 24–31 (GLDAAGKT), 126–129 (NKQD), and alanine 160.

This sequence belongs to the small GTPase superfamily. Arf family. May interact with GTPase RAB5b.

It localises to the golgi apparatus membrane. The enzyme catalyses GTP + H2O = GDP + phosphate + H(+). With respect to regulation, alternates between an inactive GDP-bound form and an active GTP-bound form. Intrinsic GTPase activity is almost undetectable in vitro. Activated by a guanine nucleotide-exchange factor (GEF) and inactivated by GTPase-activating protein ARFGAP1. Functionally, small GTPase involved in protein trafficking between different compartments. Modulates vesicle budding and uncoating within the Golgi complex. In its GTP-bound form, triggers the recruitment of coatomer proteins to the Golgi membrane. The hydrolysis of ARF1-bound GTP, which is mediated by ARFGAPs proteins, is required for dissociation of coat proteins from Golgi membranes and vesicles. Regulates the transport of N-acylated AK2 to the parasitophorous vacuole membrane. May be involved in the activation of lipid kinase PIP5K. The protein is ADP-ribosylation factor 1 (ARF1) of Plasmodium falciparum (isolate NF54).